The sequence spans 226 residues: Octanoyltransferase (226 aa).

The BPL/LPL catalytic domain maps to Gly-37 to Glu-220. Residues Arg-76–His-83, Ala-151–Gly-153, and Gly-164–Ser-166 contribute to the substrate site. Cys-182 serves as the catalytic Acyl-thioester intermediate.

Belongs to the LipB family.

The protein resides in the cytoplasm. The enzyme catalyses octanoyl-[ACP] + L-lysyl-[protein] = N(6)-octanoyl-L-lysyl-[protein] + holo-[ACP] + H(+). It participates in protein modification; protein lipoylation via endogenous pathway; protein N(6)-(lipoyl)lysine from octanoyl-[acyl-carrier-protein]: step 1/2. In terms of biological role, catalyzes the transfer of endogenously produced octanoic acid from octanoyl-acyl-carrier-protein onto the lipoyl domains of lipoate-dependent enzymes. Lipoyl-ACP can also act as a substrate although octanoyl-ACP is likely to be the physiological substrate. The chain is Octanoyltransferase from Caulobacter vibrioides (strain ATCC 19089 / CIP 103742 / CB 15) (Caulobacter crescentus).